We begin with the raw amino-acid sequence, 100 residues long: uncharacterized protein (100 aa).

It is found in the mitochondrion. This is an uncharacterized protein from Arabidopsis thaliana (Mouse-ear cress).